The sequence spans 520 residues: MRKVEFLDTTLRDGEQTPGVNFSIKEKVAIAKQLEKWGIASIEAGFPAASPDSFEAVRQISAAMTTTAVSGLARSVKSDIDACYEALKDAKYPQCHVFIATSPIHREYKLKKTKEEILDIIKEHVTYARSKFDVVEFSPEDATRTELDYLLQVVQTAVDAGATYINIPDTVGFTTPEEYGNIFKYLIENTKSDREIIFSPHCHDDLGMATANTLAAIKNGAGRVEGTVNGIGERAGNVALEEIAVALNIREDYYQATSDIVLNETVNTSELISRFSGISIPKNKAVVGGNAFSHESGIHQDGVLKNPLTYEIITPELVGVKHNSLPLGKLSGRHAFVEKLKELELAFEESEIATLFGKFKKLADKKHEITDADIRALVAGTEIENPEGFHFGDLKLTSNADDTVTAEVLMVNADGEEVEVIANGKGSVEAIYNAVDKFFNQTVRLLSYTMDAVTDGIDSQARVSVSIENVDTGTIFNASGIDFDVLKAGAIAYVNANAFVQKENAGEIGKAVSFRDVPTN.

The Pyruvate carboxyltransferase domain maps to 4 to 266 (VEFLDTTLRD…TSDIVLNETV (263 aa)). Mn(2+)-binding residues include D13, H201, H203, and N237. The regulatory domain stretch occupies residues 390–520 (HFGDLKLTSN…AVSFRDVPTN (131 aa)).

Belongs to the alpha-IPM synthase/homocitrate synthase family. LeuA type 1 subfamily. As to quaternary structure, homodimer. It depends on Mn(2+) as a cofactor.

The protein localises to the cytoplasm. It catalyses the reaction 3-methyl-2-oxobutanoate + acetyl-CoA + H2O = (2S)-2-isopropylmalate + CoA + H(+). It participates in amino-acid biosynthesis; L-leucine biosynthesis; L-leucine from 3-methyl-2-oxobutanoate: step 1/4. Functionally, catalyzes the condensation of the acetyl group of acetyl-CoA with 3-methyl-2-oxobutanoate (2-ketoisovalerate) to form 3-carboxy-3-hydroxy-4-methylpentanoate (2-isopropylmalate). In Streptococcus gallolyticus (strain UCN34), this protein is 2-isopropylmalate synthase.